The chain runs to 2005 residues: Sodium channel protein type 2 subunit alpha (2005 aa).

At 1–129 the chain is on the cytoplasmic side; that stretch reads MARSVLVPPG…KLAIKILVHS (129 aa). Serine 4 is subject to Phosphoserine. A disordered region spans residues 28 to 61; sequence RIAEEKAKRPKQERKDEDDENGPKPNSDLEAGKS. Lysine 38 participates in a covalent cross-link: Glycyl lysine isopeptide (Lys-Gly) (interchain with G-Cter in SUMO1). The stretch at 111–456 is one I repeat; that stretch reads ILTPFNPIRK…QQMLEQLKKQ (346 aa). Residues 130–148 traverse the membrane as a helical segment; sequence LFNVLIMCTILTNCVFMTM. The Extracellular segment spans residues 149-155; the sequence is SNPPDWT. The helical transmembrane segment at 156 to 176 threads the bilayer; the sequence is KNVEYTFTGIYTFESLIKILA. Residues 177–190 lie on the Cytoplasmic side of the membrane; it reads RGFCLEDFTFLRNP. A helical transmembrane segment spans residues 191–208; sequence WNWLDFTVITFAYVTEFV. At 209–214 the chain is on the extracellular side; the sequence is NLGNVS. Asparagine 212 carries N-linked (GlcNAc...) asparagine glycosylation. A helical membrane pass occupies residues 215–231; the sequence is ALRTFRVLRALKTISVI. Over 232-250 the chain is Cytoplasmic; it reads PGLKTIVGALIQSVKKLSD. A helical transmembrane segment spans residues 251–270; that stretch reads VMILTVFCLSVFALIGLQLF. The Extracellular segment spans residues 271-369; the sequence is MGNLRNKCLQ…PNYGYTSFDT (99 aa). Cysteine 278 and cysteine 338 are joined by a disulfide. 6 N-linked (GlcNAc...) asparagine glycosylation sites follow: asparagine 285, asparagine 291, asparagine 297, asparagine 303, asparagine 308, and asparagine 340. Residues 370–394 constitute an intramembrane region (pore-forming); sequence FSWAFLSLFRLMTQDFWENLYQLTL. Residues 395–401 lie on the Extracellular side of the membrane; it reads RAAGKTY. The helical transmembrane segment at 402–422 threads the bilayer; sequence MIFFVLVIFLGSFYLINLILA. Over 423–759 the chain is Cytoplasmic; it reads VVAMAYEEQN…HVVNLVVMDP (337 aa). Phosphoserine is present on residues serine 468, serine 471, serine 484, serine 526, serine 528, serine 531, serine 553, serine 554, and serine 558. The segment at 494 to 529 is disordered; the sequence is SSKSEKELKNRRKKKKQKEQAGEEEKEDAVRKSASE. Residues 511-529 are compositionally biased toward basic and acidic residues; that stretch reads KEQAGEEEKEDAVRKSASE. Serine 554 bears the Phosphoserine; by PKC; in vitro mark. Serine 573 and serine 576 each carry phosphoserine; by PKC; in vitro. A phosphoserine mark is found at serine 589, serine 610, serine 623, serine 687, serine 688, and serine 721. The interval 591 to 634 is disordered; sequence NDFADDEHSTFEDNDSRRDSLFVPHRHGERRPSNVSQASRASRG. The segment covering 596-610 has biased composition (basic and acidic residues); that stretch reads DEHSTFEDNDSRRDS. An II repeat occupies 741-1013; the sequence is CCKPWLKVKH…QIAVGRMQKG (273 aa). The chain crosses the membrane as a helical span at residues 760–778; that stretch reads FVDLAITICIVLNTLFMAM. The Extracellular portion of the chain corresponds to 779–789; that stretch reads EHYPMTEQFSS. A helical transmembrane segment spans residues 790–809; sequence VLSVGNLVFTGIFTAEMFLK. Topologically, residues 810 to 823 are cytoplasmic; that stretch reads IIAMDPYYYFQEGW. Residues 824–843 traverse the membrane as a helical segment; that stretch reads NIFDGFIVSLSLMELGLANV. The Extracellular portion of the chain corresponds to 844-845; it reads EG. The chain crosses the membrane as a helical span at residues 846–863; it reads LSVLRSFRLLRVFKLAKS. The Cytoplasmic segment spans residues 864–879; it reads WPTLNMLIKIIGNSVG. The chain crosses the membrane as a helical span at residues 880 to 898; sequence ALGNLTLVLAIIVFIFAVV. At 899-927 the chain is on the extracellular side; sequence GMQLFGKSYKECVCKISNDCELPRWHMHH. Cysteine 912 and cysteine 918 are oxidised to a cystine. The segment at 917 to 918 is binds SCN2B; it reads DC. Residues 928–948 constitute an intramembrane region (pore-forming); the sequence is FFHSFLIVFRVLCGEWIETMW. At 949-961 the chain is on the extracellular side; the sequence is DCMEVAGQTMCLT. Cysteines 950 and 959 form a disulfide. Residues 962–982 form a helical membrane-spanning segment; it reads VFMMVMVIGNLVVLNLFLALL. Topologically, residues 983 to 1209 are cytoplasmic; it reads LSSFSSDNLA…TCYKIVEHNW (227 aa). The tract at residues 1120–1166 is disordered; that stretch reads EEFSSESDMEESKEKLNATSSSEGSTVDIGAPAEGEQPEAEPEESLE. A compositionally biased stretch (acidic residues) spans 1155–1166; the sequence is EQPEAEPEESLE. The stretch at 1190–1504 is one III repeat; sequence KGKLWWNLRK…KKYYNAMKKL (315 aa). A helical transmembrane segment spans residues 1210-1227; it reads FETFIVFMILLSSGALAF. The Extracellular segment spans residues 1228–1240; it reads EDIYIEQRKTIKT. Residues 1241–1259 form a helical membrane-spanning segment; that stretch reads MLEYADKVFTYIFILEMLL. Over 1260-1273 the chain is Cytoplasmic; it reads KWVAYGFQMYFTNA. Residues 1274-1292 traverse the membrane as a helical segment; the sequence is WCWLDFLIVDVSLVSLTAN. Residues 1293-1300 lie on the Extracellular side of the membrane; sequence ALGYSELG. A helical transmembrane segment spans residues 1301 to 1319; the sequence is AIKSLRTLRALRPLRALSR. Topologically, residues 1320–1336 are cytoplasmic; the sequence is FEGMRVVVNALLGAIPS. The helical transmembrane segment at 1337–1356 threads the bilayer; that stretch reads IMNVLLVCLIFWLIFSIMGV. Over 1357–1408 the chain is Extracellular; it reads NLFAGKFYHCINYTTGEMFDVSVVNNYSECQALIESNQTARWKNVKVNFDNV. Cysteine 1366 and cysteine 1386 are disulfide-bonded. 3 N-linked (GlcNAc...) asparagine glycosylation sites follow: asparagine 1368, asparagine 1382, and asparagine 1393. The segment at residues 1409-1430 is an intramembrane region (pore-forming); that stretch reads GLGYLSLLQVATFKGWMDIMYA. Residues 1431–1447 lie on the Extracellular side of the membrane; it reads AVDSRNVELQPKYEDNL. A helical transmembrane segment spans residues 1448–1469; sequence YMYLYFVIFIIFGSFFTLNLFI. Residues 1470–1532 are Cytoplasmic-facing; that stretch reads GVIIDNFNQQ…MVFDFVTKQV (63 aa). At serine 1506 the chain carries Phosphoserine; by PKC. The IV repeat unit spans residues 1513–1811; it reads IPRPANKFQG…WEKFDPDATQ (299 aa). Residues 1533-1550 traverse the membrane as a helical segment; that stretch reads FDISIMILICLNMVTMMV. Over 1551–1561 the chain is Extracellular; that stretch reads ETDDQSQEMTN. A helical membrane pass occupies residues 1562–1580; the sequence is ILYWINLVFIVLFTGECVL. Topologically, residues 1581-1592 are cytoplasmic; the sequence is KLISLRHYYFTI. A helical transmembrane segment spans residues 1593 to 1610; the sequence is GWNIFDFVVVILSIVGMF. Residues 1611–1623 are Extracellular-facing; the sequence is LAELIEKYFVSPT. A helical membrane pass occupies residues 1624–1640; it reads LFRVIRLARIGRILRLI. At 1641-1659 the chain is on the cytoplasmic side; that stretch reads KGAKGIRTLLFALMMSLPA. Residues 1660 to 1677 traverse the membrane as a helical segment; that stretch reads LFNIGLLLFLVMFIYAIF. The Extracellular segment spans residues 1678–1699; the sequence is GMSNFAYVKREVGIDDMFNFET. Positions 1700–1722 form an intramembrane region, pore-forming; the sequence is FGNSMICLFQITTSAGWDGLLAP. Residues 1723 to 1752 are Extracellular-facing; that stretch reads ILNSGPPDCDPEKDHPGSSVKGDCGNPSVG. Residues cysteine 1731 and cysteine 1746 are joined by a disulfide bond. The chain crosses the membrane as a helical span at residues 1753-1775; sequence IFFFVSYIIISFLVVVNMYIAVI. The Cytoplasmic portion of the chain corresponds to 1776–2005; the sequence is LENFSVATEE…KGKDIRESKK (230 aa). In terms of domain architecture, IQ spans 1905 to 1934; sequence EEVSAIVIQRAYRRYLLKQKVKKVSSIYKK. Residue serine 1930 is modified to Phosphoserine. Residues 1933 to 1964 show a composition bias toward basic and acidic residues; that stretch reads KKDKGKEDEGTPIKEDIITDKLNENSTPEKTD. A disordered region spans residues 1933-2005; the sequence is KKDKGKEDEG…KGKDIRESKK (73 aa). Threonine 1943, threonine 1963, and threonine 1966 each carry phosphothreonine. Serine 1971 is modified (phosphoserine). A compositionally biased stretch (basic and acidic residues) spans 1979–2005; sequence TKPEKEKFEKDKSEKEDKGKDIRESKK.

Belongs to the sodium channel (TC 1.A.1.10) family. Nav1.2/SCN2A subfamily. Heterooligomer of a large alpha subunit and a smaller beta subunit. Heterooligomer with SCN2B or SCN4B; disulfide-linked. Heterooligomer with SCN1B or SCN3B; non-covalently linked. Interacts with NEDD4L. Interacts with CALM. Interacts with TMEM233. Interacts with the conotoxin GVIIJ. Interacts with the scorpion toxin BMK M1. In terms of processing, may be ubiquitinated by NEDD4L; which would promote its endocytosis. Phosphorylation at Ser-1506 by PKC in a highly conserved cytoplasmic loop slows inactivation of the sodium channel and reduces peak sodium currents. Post-translationally, sumoylated at Lys-38. Sumoylation is induced by hypoxia, increases voltage-gated sodium current and mediates the early response to acute hypoxia in neurons. Sumoylated SCN2A is located at the cell membrane. In terms of tissue distribution, expressed in brain (at protein level). Expressed in cerebellar granule neurons (at protein level).

It localises to the cell membrane. The enzyme catalyses Na(+)(in) = Na(+)(out). Functionally, mediates the voltage-dependent sodium ion permeability of excitable membranes. Assuming opened or closed conformations in response to the voltage difference across the membrane, the protein forms a sodium-selective channel through which Na(+) ions may pass in accordance with their electrochemical gradient. Implicated in the regulation of hippocampal replay occurring within sharp wave ripples (SPW-R) important for memory. In Rattus norvegicus (Rat), this protein is Sodium channel protein type 2 subunit alpha.